Here is a 549-residue protein sequence, read N- to C-terminus: Chaperonin GroEL 5 (549 aa).

ATP-binding positions include 30 to 33 (TLGP), K51, 87 to 91 (DGTTT), G415, and D495.

It belongs to the chaperonin (HSP60) family. In terms of assembly, forms a cylinder of 14 subunits composed of two heptameric rings stacked back-to-back. Interacts with the co-chaperonin GroES.

The protein resides in the cytoplasm. It catalyses the reaction ATP + H2O + a folded polypeptide = ADP + phosphate + an unfolded polypeptide.. Its function is as follows. Together with its co-chaperonin GroES, plays an essential role in assisting protein folding. The GroEL-GroES system forms a nano-cage that allows encapsulation of the non-native substrate proteins and provides a physical environment optimized to promote and accelerate protein folding. The sequence is that of Chaperonin GroEL 5 from Mesorhizobium japonicum (strain LMG 29417 / CECT 9101 / MAFF 303099) (Mesorhizobium loti (strain MAFF 303099)).